Here is a 541-residue protein sequence, read N- to C-terminus: Protein wntless homolog (541 aa).

At 1–15 (MAGAIIENMGTKKLC) the chain is on the cytoplasmic side. Residues 16-36 (IVGGILLVFQIIAFLVGGLIA) form a helical membrane-spanning segment. Topologically, residues 37–232 (PGPTTAVSYM…GIHQNGGFTK (196 aa)) are lumenal. Positions 101 to 232 (MEMSPWFQFM…GIHQNGGFTK (132 aa)) are interaction with Wnt proteins. The chain crosses the membrane as a helical span at residues 233–253 (VWFAMKTFLTPSIFIIMVWYW). Residues 254-268 (RRITMMSRPPVLLEK) are Cytoplasmic-facing. The helical transmembrane segment at 269–289 (VIFALGISMTFINIPVEWFSI) threads the bilayer. Topologically, residues 290 to 303 (GFDWTWMLLFGDIR) are lumenal. A helical membrane pass occupies residues 304–324 (QGIFYAMLLSFWIIFCGEHMM). Topologically, residues 325-331 (DQHERNH) are cytoplasmic. The helical transmembrane segment at 332 to 352 (IAGYWKQVGPIAVGSFCLFIF) threads the bilayer. At 353–380 (DMCERGVQLTNPFYSIWTTDIGTELAMA) the chain is on the lumenal side. A helical transmembrane segment spans residues 381–401 (FIIVAGICLCLYFLFLCFMVF). Topologically, residues 402-431 (QVFRNISGKQSSLPAMSKVRRLHYEGLIFR) are cytoplasmic. The chain crosses the membrane as a helical span at residues 432–452 (FKFLMLITLACAAMTVIFFIV). Over 453 to 471 (SQVTEGHWKWGGVTVQVNS) the chain is Lumenal. The helical transmembrane segment at 472 to 492 (AFFTGIYGMWNLYVFALMFLY) threads the bilayer. At 493-541 (APSHKNYGEDQSNGDLGVHSGEELQLTTTITHVDGPTEIYKLTRKEAQE) the chain is on the cytoplasmic side.

Belongs to the wntless family. In terms of assembly, interacts with WNT3A. Interacts with WNT1, WNT3 and WNT5A.

It is found in the golgi apparatus membrane. The protein resides in the cytoplasmic vesicle membrane. The protein localises to the cell membrane. Its subcellular location is the endoplasmic reticulum membrane. It localises to the early endosome membrane. In terms of biological role, regulates Wnt proteins sorting and secretion in a feedback regulatory mechanism. This reciprocal interaction plays a key role in the regulation of expression, subcellular location, binding and organelle-specific association of Wnt proteins. Also plays an important role in establishment of the anterior-posterior body axis formation during development. The chain is Protein wntless homolog (WLS) from Pongo abelii (Sumatran orangutan).